The following is a 77-amino-acid chain: Small ribosomal subunit protein bS18 (77 aa).

Belongs to the bacterial ribosomal protein bS18 family. Part of the 30S ribosomal subunit. Forms a tight heterodimer with protein bS6.

Its function is as follows. Binds as a heterodimer with protein bS6 to the central domain of the 16S rRNA, where it helps stabilize the platform of the 30S subunit. The chain is Small ribosomal subunit protein bS18 from Halalkalibacterium halodurans (strain ATCC BAA-125 / DSM 18197 / FERM 7344 / JCM 9153 / C-125) (Bacillus halodurans).